Consider the following 290-residue polypeptide: Ribosomal RNA small subunit methyltransferase A (290 aa).

S-adenosyl-L-methionine is bound by residues N27, L29, G54, E75, D100, and N125.

Belongs to the class I-like SAM-binding methyltransferase superfamily. rRNA adenine N(6)-methyltransferase family. RsmA subfamily.

The protein localises to the cytoplasm. It catalyses the reaction adenosine(1518)/adenosine(1519) in 16S rRNA + 4 S-adenosyl-L-methionine = N(6)-dimethyladenosine(1518)/N(6)-dimethyladenosine(1519) in 16S rRNA + 4 S-adenosyl-L-homocysteine + 4 H(+). In terms of biological role, specifically dimethylates two adjacent adenosines (A1518 and A1519) in the loop of a conserved hairpin near the 3'-end of 16S rRNA in the 30S particle. May play a critical role in biogenesis of 30S subunits. This Streptococcus thermophilus (strain CNRZ 1066) protein is Ribosomal RNA small subunit methyltransferase A.